Here is a 160-residue protein sequence, read N- to C-terminus: Small ribosomal subunit protein uS9 (160 aa).

Polar residues predominate over residues 1–18; it reads MTDTSNSLQDLGTLTGAP. The disordered stretch occupies residues 1 to 37; the sequence is MTDTSNSLQDLGTLTGAPSAQPVKSVEPKIDAQGRAY.

Belongs to the universal ribosomal protein uS9 family.

This chain is Small ribosomal subunit protein uS9, found in Hyphomonas neptunium (strain ATCC 15444).